The chain runs to 708 residues: B-cell lymphoma 6 protein homolog (708 aa).

In terms of domain architecture, BTB spans 32–99 (TDVVIIVNRE…MYTSRLNLRE (68 aa)). Residues 303–317 (AKEEERTSSEDEISQ) show a composition bias toward basic and acidic residues. Disordered regions lie at residues 303-371 (AKEE…KSPT) and 431-470 (PTKMSVNGEDSNIPQASRLNNIVNRSRDGSPRSSEGQSPL). Composition is skewed to polar residues over residues 333–370 (SPQSPQKSDCQPNSPTESSSSKNARISQNSNSLFTKSP) and 431–454 (PTKMSVNGEDSNIPQASRLNNIVN). C2H2-type zinc fingers lie at residues 520–543 (FFCNECDCRFSEEASLKRHSLQVH), 548–570 (YKCDRCQASFRYKGNLASHKTVH), 576–598 (YRCNICGAQFNRPANLKTHTRIH), 604–626 (YKCETCGARFVQVAHLRAHVLIH), 632–654 (YPCEICGTRFRHLQTLKSHLRIH), and 660–683 (YHCEKCNLHFRHKSQLRLHLRQKH).

It localises to the nucleus. In terms of biological role, transcriptional repressor mainly required for germinal center (GC) formation and antibody affinity maturation which has different mechanisms of action specific to the lineage and biological functions. Forms complexes with different corepressors and histone deacetylases to repress the transcriptional expression of different subsets of target genes. Represses its target genes by binding directly to the DNA sequence 5'-TTCCTAGAA-3' (BCL6-binding site) or indirectly by repressing the transcriptional activity of transcription factors. In GC B-cells, represses genes that function in differentiation, inflammation, apoptosis and cell cycle control, also autoregulates its transcriptional expression and up-regulates, indirectly, the expression of some genes important for GC reactions, such as AICDA, through the repression of microRNAs expression. An important function is to allow GC B-cells to proliferate very rapidly in response to T-cell dependent antigens and tolerate the physiological DNA breaks required for immunglobulin class switch recombination and somatic hypermutation without inducing a p53/TP53-dependent apoptotic response. In follicular helper CD4(+) T-cells (T(FH) cells), promotes the expression of T(FH)-related genes but inhibits the differentiation of T(H)1, T(H)2 and T(H)17 cells. Also required for the establishment and maintenance of immunological memory for both T- and B-cells. Suppresses macrophage proliferation through competition with STAT5 for STAT-binding motifs binding on certain target genes, such as CCL2 and CCND2. In response to genotoxic stress, controls cell cycle arrest in GC B-cells in both p53/TP53-dependedent and -independent manners. Besides, also controls neurogenesis through the alteration of the composition of NOTCH-dependent transcriptional complexes at selective NOTCH targets, such as HES5, including the recruitment of the deacetylase SIRT1 and resulting in an epigenetic silencing leading to neuronal differentiation. This chain is B-cell lymphoma 6 protein homolog, found in Gallus gallus (Chicken).